The following is a 96-amino-acid chain: Aspartyl/glutamyl-tRNA(Asn/Gln) amidotransferase subunit C (96 aa).

It belongs to the GatC family. In terms of assembly, heterotrimer of A, B and C subunits.

The enzyme catalyses L-glutamyl-tRNA(Gln) + L-glutamine + ATP + H2O = L-glutaminyl-tRNA(Gln) + L-glutamate + ADP + phosphate + H(+). It carries out the reaction L-aspartyl-tRNA(Asn) + L-glutamine + ATP + H2O = L-asparaginyl-tRNA(Asn) + L-glutamate + ADP + phosphate + 2 H(+). In terms of biological role, allows the formation of correctly charged Asn-tRNA(Asn) or Gln-tRNA(Gln) through the transamidation of misacylated Asp-tRNA(Asn) or Glu-tRNA(Gln) in organisms which lack either or both of asparaginyl-tRNA or glutaminyl-tRNA synthetases. The reaction takes place in the presence of glutamine and ATP through an activated phospho-Asp-tRNA(Asn) or phospho-Glu-tRNA(Gln). In Deinococcus deserti (strain DSM 17065 / CIP 109153 / LMG 22923 / VCD115), this protein is Aspartyl/glutamyl-tRNA(Asn/Gln) amidotransferase subunit C.